A 344-amino-acid polypeptide reads, in one-letter code: Ion-translocating oxidoreductase complex subunit D (344 aa).

4 consecutive transmembrane segments (helical) span residues leucine 23–threonine 43, leucine 44–leucine 64, serine 77–leucine 99, and proline 120–threonine 140. Residue threonine 172 is modified to FMN phosphoryl threonine. 5 consecutive transmembrane segments (helical) span residues leucine 198 to leucine 218, leucine 222 to phenylalanine 242, glycine 252 to threonine 272, leucine 285 to proline 305, and aspartate 306 to threonine 326.

It belongs to the NqrB/RnfD family. The complex is composed of six subunits: RnfA, RnfB, RnfC, RnfD, RnfE and RnfG. FMN is required as a cofactor.

It is found in the cell inner membrane. In terms of biological role, part of a membrane-bound complex that couples electron transfer with translocation of ions across the membrane. In Pseudomonas aeruginosa (strain UCBPP-PA14), this protein is Ion-translocating oxidoreductase complex subunit D.